Here is a 244-residue protein sequence, read N- to C-terminus: Membrane-spanning 4-domains subfamily A member 6B (244 aa).

Residues 1–46 (MIPQVVTSETVAMISPNGMSLPQTDKPQPFHQWQDSLKKHLKAEIK) lie on the Cytoplasmic side of the membrane. The helical transmembrane segment at 47–67 (VMAAIQIMCAVMVLSLGIILA) threads the bilayer. The Extracellular portion of the chain corresponds to 68–84 (SVPSNLHFTSVFSVLLK). A helical membrane pass occupies residues 85 to 105 (SGYPFIGALFFIVSGILSIVT). Over 106 to 121 (ETKSTKILVDSSLTLN) the chain is Cytoplasmic. The chain crosses the membrane as a helical span at residues 122-142 (ILSVSFAFMGIIIISVSLAGL). Residues 143–176 (HPASEQCLQSKELRPTEYHYYQFLDRNECFAAKS) are Extracellular-facing. The helical transmembrane segment at 177-197 (VLAGVFSLMLISTMLELGLAV) threads the bilayer. Residues 198–244 (LTAMLWWKQSHSNIPGNVMFLPHSSNNDSNMESKVLCNPSYEEQLVC) are Cytoplasmic-facing.

The protein belongs to the MS4A family. Expressed at high levels in thymus, spleen, and peripheral lymph nodes, with less abundant levels in non-lymphoid tissues.

Its subcellular location is the membrane. Functionally, may be involved in signal transduction as a component of a multimeric receptor complex. This chain is Membrane-spanning 4-domains subfamily A member 6B (Ms4a6b), found in Mus musculus (Mouse).